We begin with the raw amino-acid sequence, 145 residues long: Halilectin 3, alpha chain (145 aa).

Asparagine 73 is a glycosylation site (N-linked (GlcNAc...) asparagine).

In terms of assembly, probable heterotrimer consisting of an alpha chain and two beta chains. The alpha chain can probably have different glycosylation states. Glycosylated.

In terms of biological role, lectin with affinity for N-acetyl-galactosamine, carragenan and glycoprotein porcine stomach mucin (PSM). Has metal-independent hemagglutinating activity towards erythrocytes from rabbit and human. Hemagglutinating activity is not inhibited by D-galactose, D-glucose, D-mannose, D-fucose, methyl-alpha-D-galactopyranoside, methyl-alpha-D-glucopyranoside, N-acetyl-glucosamine, N-acetyl-mannosamine, D-fructose, alpha-D-lactose, beta-D-lactose, D-lactulose, D-sucrose, fucoidan or glycoproteins thyroglobulin and ovalmucoid. The sequence is that of Halilectin 3, alpha chain from Haliclona caerulea (Blue Caribbean sponge).